A 98-amino-acid chain; its full sequence is Small ribosomal subunit protein bS18c (98 aa).

A compositionally biased stretch (basic and acidic residues) spans 1–13 (MSKQSFDFKRYKP). The disordered stretch occupies residues 1-26 (MSKQSFDFKRYKPEAPSGSRKRPLKK).

It belongs to the bacterial ribosomal protein bS18 family. In terms of assembly, part of the 30S ribosomal subunit.

It is found in the plastid. The protein resides in the chloroplast. This Gnetum parvifolium (Small-leaved jointfir) protein is Small ribosomal subunit protein bS18c.